We begin with the raw amino-acid sequence, 236 residues long: Small ribosomal subunit protein uS2c (236 aa).

The protein belongs to the universal ribosomal protein uS2 family.

The protein resides in the plastid. The protein localises to the chloroplast. The polypeptide is Small ribosomal subunit protein uS2c (rps2) (Zea mays (Maize)).